We begin with the raw amino-acid sequence, 192 residues long: Putative manganese efflux pump MntP (192 aa).

6 helical membrane passes run 3–23 (LIFT…AVSF), 38–58 (FILA…GWLL), 61–81 (GFAD…LFII), 101–121 (VFNF…ALAV), 130–150 (IVPL…SVGG), and 167–187 (ILGG…HLVW).

It belongs to the MntP (TC 9.B.29) family.

The protein localises to the cell membrane. Probably functions as a manganese efflux pump. This Methanospirillum hungatei JF-1 (strain ATCC 27890 / DSM 864 / NBRC 100397 / JF-1) protein is Putative manganese efflux pump MntP.